We begin with the raw amino-acid sequence, 177 residues long: Large ribosomal subunit protein uL6 (177 aa).

Belongs to the universal ribosomal protein uL6 family. In terms of assembly, part of the 50S ribosomal subunit.

Functionally, this protein binds to the 23S rRNA, and is important in its secondary structure. It is located near the subunit interface in the base of the L7/L12 stalk, and near the tRNA binding site of the peptidyltransferase center. The protein is Large ribosomal subunit protein uL6 of Bartonella bacilliformis (strain ATCC 35685 / KC583 / Herrer 020/F12,63).